A 462-amino-acid polypeptide reads, in one-letter code: Chitinase-like mite allergen Der p 18.0101 (462 aa).

The N-terminal stretch at 1–25 (MTRLSFTVLIFLAAYFGSNIRPNVA) is a signal peptide. Positions 29–378 (PKTVCYYESW…HAINSNYFRG (350 aa)) constitute a GH18 domain. Cysteine 33 and cysteine 58 are disulfide-bonded. N-linked (GlcNAc...) asparagine glycans are attached at residues asparagine 338 and asparagine 441. The 59-residue stretch at 404-462 (VFHCHQEGFFRDKTYCAKYYECKKGDFGLEQTVHHCPNHSQAFDEVSRTCVDHAKIPGC) folds into the Chitin-binding type-2 domain. A disulfide bond links cysteine 439 and cysteine 453.

It belongs to the glycosyl hydrolase 18 family. Chitinase class II subfamily. Expressed in the peritrophic matrix of the midgut, and only very weakly in fecal pellets.

It localises to the secreted. In terms of biological role, probably a non-catalytic chitinase-like protein, which binds to insoluble chitin and enhances the activity of the catalytic chitinases. Has weak chitin-binding activity. This is Chitinase-like mite allergen Der p 18.0101 from Dermatophagoides pteronyssinus (European house dust mite).